The chain runs to 145 residues: UPF0310 protein PH1033 (145 aa).

It belongs to the UPF0310 family.

In Pyrococcus horikoshii (strain ATCC 700860 / DSM 12428 / JCM 9974 / NBRC 100139 / OT-3), this protein is UPF0310 protein PH1033.